The chain runs to 1069 residues: Epstein-Barr nuclear antigen 6 (1069 aa).

5 disordered regions span residues 1-75 (MESF…RIRR), 353-708 (MLAT…PCQS), 733-776 (SSMS…LYPG), 884-932 (REPR…PPRL), and 1008-1069 (PLDI…SELD). Residues 50–67 (PDSRDQQSRGQRRGDENR) show a composition bias toward basic and acidic residues. Acidic residues-rich tracts occupy residues 381 to 391 (VELESSDDELP) and 507 to 524 (YDDDIIEVIDVETTEEET). The segment covering 543 to 561 (STGSAMSSSHTDPSVTQPS) has biased composition (polar residues). Residues 689-708 (QQEPSSQQQPATQSTPPCQS) show a composition bias toward low complexity. The segment covering 742–751 (SHEEQPRYED) has biased composition (basic and acidic residues). Positions 1032–1048 (SQATSEAQEILSDNSEI) are enriched in polar residues.

This sequence belongs to the herpesviridae EBNA-6 family. Interacts with host CTPB1; this interaction leads to gene repression, but also seems to interfere with the repressive function of CtBP pre-bound to DNA, leading to EBNA6 mediated up-regulation of many host genes. Interacts with host MYC; this interaction enhances MYC stability. Interacts (via N-terminus) with host RBPJ. Interacts (via N-terminus) with host histone H2AX; this interaction facilitates H2AX proteasomal degradation. Interacts with host TP73; this interaction inhibits TP73-mediated apoptotic pathway. Interacts (via N-terminus) with host PIM1; this interaction upregulates and stabilizes PIM1 and induces cell proliferation by inhibiting the growth suppressive properties of p21.

The protein localises to the host nucleus. It localises to the host nucleus matrix. Its function is as follows. Plays an essential role for the activation and immortalization of human B-cells. Represses transcription of viral promoters TP1 and Cp through interaction with host RBPJ, and inhibits EBNA2-mediated activation of these promoters. Targets host chromatin through interactions with host transcription factors, especially RBPJ and IRF4. Alternatively, EBNA6 also regulates the transcription of the EBV oncogene LMP1 in a cell cycle-dependent manner. Modulates the activity of several host proteins involved in cell cycle regulation including host cyclin A, MYC, RB, p21 and p27 mainly through binding to the host SCF(SKP2) complex. Inhibits the promoter of host H2AX and targets H2AX to proteasomal degradation in order to promote latency and cell proliferation. Upregulates host PIM1 expression and stabilization. Potentiates PIM1 to promote cell proliferation by inhibiting the growth suppressive properties of p21. In Epstein-Barr virus (strain AG876) (HHV-4), this protein is Epstein-Barr nuclear antigen 6 (EBNA6).